The chain runs to 68 residues: Conotoxin mr3g (68 aa).

The first 19 residues, Met1 to Ala19, serve as a signal peptide directing secretion. The propeptide occupies Val20 to Arg51. Cystine bridges form between Cys53/Cys67, Cys54/Cys63, and Cys59/Cys66. Pro55 and Pro65 each carry 4-hydroxyproline. Position 67 is a cysteine amide (Cys67).

As to expression, expressed by the venom duct.

It localises to the secreted. Intracranially injection into mice does not elicit symptoms. This chain is Conotoxin mr3g, found in Conus marmoreus (Marble cone).